Here is a 350-residue protein sequence, read N- to C-terminus: Flap endonuclease 1 (350 aa).

Residues 1–101 are N-domain; sequence MGVNLRELIP…REVEERLRRK (101 aa). Mg(2+)-binding residues include D30, D83, E155, E157, D176, D178, and D239. Residues 119-261 are I-domain; it reads EARKYAMMAA…TALRLVKSLG (143 aa). Positions 341-349 are interaction with PCNA; the sequence is RQSRLDMWF.

The protein belongs to the XPG/RAD2 endonuclease family. FEN1 subfamily. Interacts with PCNA. PCNA stimulates the nuclease activity without altering cleavage specificity. It depends on Mg(2+) as a cofactor.

Structure-specific nuclease with 5'-flap endonuclease and 5'-3' exonuclease activities involved in DNA replication and repair. During DNA replication, cleaves the 5'-overhanging flap structure that is generated by displacement synthesis when DNA polymerase encounters the 5'-end of a downstream Okazaki fragment. Binds the unpaired 3'-DNA end and kinks the DNA to facilitate 5' cleavage specificity. Cleaves one nucleotide into the double-stranded DNA from the junction in flap DNA, leaving a nick for ligation. Also involved in the base excision repair (BER) pathway. Acts as a genome stabilization factor that prevents flaps from equilibrating into structures that lead to duplications and deletions. Also possesses 5'-3' exonuclease activity on nicked or gapped double-stranded DNA. This chain is Flap endonuclease 1, found in Aeropyrum pernix (strain ATCC 700893 / DSM 11879 / JCM 9820 / NBRC 100138 / K1).